The chain runs to 446 residues: 23S rRNA (uracil(1939)-C(5))-methyltransferase RlmD (446 aa).

The TRAM domain occupies 6-64 (KKLPQESITCEIESLSHEGRGVSHKDGKTLFVEGALPGETVTARYVNSRRSYDELAVEE). [4Fe-4S] cluster-binding residues include C77, C83, C86, and C165. 6 residues coordinate S-adenosyl-L-methionine: Q275, F304, N309, E325, D352, and D377. C403 acts as the Nucleophile in catalysis.

This sequence belongs to the class I-like SAM-binding methyltransferase superfamily. RNA M5U methyltransferase family. RlmD subfamily.

It carries out the reaction uridine(1939) in 23S rRNA + S-adenosyl-L-methionine = 5-methyluridine(1939) in 23S rRNA + S-adenosyl-L-homocysteine + H(+). Functionally, catalyzes the formation of 5-methyl-uridine at position 1939 (m5U1939) in 23S rRNA. This chain is 23S rRNA (uracil(1939)-C(5))-methyltransferase RlmD, found in Hahella chejuensis (strain KCTC 2396).